Consider the following 1151-residue polypeptide: Error-prone DNA polymerase (1151 aa).

Positions 1108-1151 are disordered; sequence HPVPSGDALIEPLNDDRRDHADAPAQKIRHPRNVRILPPSRDFH.

It belongs to the DNA polymerase type-C family. DnaE2 subfamily.

Its subcellular location is the cytoplasm. It catalyses the reaction DNA(n) + a 2'-deoxyribonucleoside 5'-triphosphate = DNA(n+1) + diphosphate. Its function is as follows. DNA polymerase involved in damage-induced mutagenesis and translesion synthesis (TLS). It is not the major replicative DNA polymerase. This is Error-prone DNA polymerase from Bradyrhizobium diazoefficiens (strain JCM 10833 / BCRC 13528 / IAM 13628 / NBRC 14792 / USDA 110).